We begin with the raw amino-acid sequence, 650 residues long: Threonine--tRNA ligase (650 aa).

The region spanning Asn-5–Gly-67 is the TGS domain. The tract at residues Asp-246–Pro-537 is catalytic. Residues Cys-337, His-388, and His-514 each coordinate Zn(2+).

This sequence belongs to the class-II aminoacyl-tRNA synthetase family. As to quaternary structure, homodimer. It depends on Zn(2+) as a cofactor.

It localises to the cytoplasm. It catalyses the reaction tRNA(Thr) + L-threonine + ATP = L-threonyl-tRNA(Thr) + AMP + diphosphate + H(+). Catalyzes the attachment of threonine to tRNA(Thr) in a two-step reaction: L-threonine is first activated by ATP to form Thr-AMP and then transferred to the acceptor end of tRNA(Thr). Also edits incorrectly charged L-seryl-tRNA(Thr). The sequence is that of Threonine--tRNA ligase from Protochlamydia amoebophila (strain UWE25).